A 295-amino-acid chain; its full sequence is MYTGRFAPSPTGLLHIGSLLTAAASYADARSNGGKWLVRMEDLDPPREMPGAASHILHTLEAFGFEWDGEVAYQSRRYALYEETLCRLKTAGLVYPCHCSRKDWQAAARRGADGFVYNGRCRHPGQRPAPQGKQPAWRIRVPDRDIGFSDGIVGGYAQNLARDIGDFVLLRADGYWAYQLAVVADDAEQGVTHIVRGQDLLVSTPRQIYLQQCLGVPTPQYAHLPLLTNAQGQKWSKQTLAPALDLNRREQLLRQVFRYLNLPEAPETDRPAELLDWAVAHWDMDKVPKHAVTPP.

L-glutamate is bound by residues 5-9 and Glu-41; that span reads RFAPS. Positions 8-18 match the 'HIGH' region motif; sequence PSPTGLLHIGS. Positions 97, 99, 117, and 121 each coordinate Zn(2+). Residues Tyr-178 and Arg-196 each coordinate L-glutamate. A 'KMSKS' region motif is present at residues 234–238; it reads KWSKQ. Lys-237 provides a ligand contact to ATP.

This sequence belongs to the class-I aminoacyl-tRNA synthetase family. GluQ subfamily. Requires Zn(2+) as cofactor.

In terms of biological role, catalyzes the tRNA-independent activation of glutamate in presence of ATP and the subsequent transfer of glutamate onto a tRNA(Asp). Glutamate is transferred on the 2-amino-5-(4,5-dihydroxy-2-cyclopenten-1-yl) moiety of the queuosine in the wobble position of the QUC anticodon. The protein is Glutamyl-Q tRNA(Asp) synthetase of Neisseria meningitidis serogroup C (strain 053442).